The following is a 145-amino-acid chain: Small ribosomal subunit protein uS12 (145 aa).

This sequence belongs to the universal ribosomal protein uS12 family. In terms of assembly, part of the 30S ribosomal subunit.

Its function is as follows. With S4 and S5 plays an important role in translational accuracy. Located at the interface of the 30S and 50S subunits. The protein is Small ribosomal subunit protein uS12 of Cenarchaeum symbiosum (strain A).